The chain runs to 340 residues: Glyceraldehyde-3-phosphate dehydrogenase (340 aa).

NAD(+)-binding positions include 11 to 12 (TI) and Gly-109. Cys-123 and Cys-149 are disulfide-bonded. D-glyceraldehyde 3-phosphate is bound at residue 138-140 (SCN). The active-site Nucleophile is the Cys-139. Arg-167 contributes to the NAD(+) binding site. Residue 193–194 (HA) coordinates D-glyceraldehyde 3-phosphate. Gln-300 contributes to the NAD(+) binding site.

This sequence belongs to the glyceraldehyde-3-phosphate dehydrogenase family. In terms of assembly, homotetramer.

The protein resides in the cytoplasm. The catalysed reaction is D-glyceraldehyde 3-phosphate + phosphate + NADP(+) = (2R)-3-phospho-glyceroyl phosphate + NADPH + H(+). It catalyses the reaction D-glyceraldehyde 3-phosphate + phosphate + NAD(+) = (2R)-3-phospho-glyceroyl phosphate + NADH + H(+). It participates in carbohydrate degradation; glycolysis; pyruvate from D-glyceraldehyde 3-phosphate: step 1/5. Functionally, can use both NAD and NADP as cofactors, but exhibits a marked preference for NADP. The sequence is that of Glyceraldehyde-3-phosphate dehydrogenase (gap) from Saccharolobus solfataricus (strain ATCC 35092 / DSM 1617 / JCM 11322 / P2) (Sulfolobus solfataricus).